A 1129-amino-acid chain; its full sequence is Phytochrome A type 3 (1129 aa).

Residues 1–21 are compositionally biased toward low complexity; the sequence is MSSSRPASSSSSRNRQSSQAR. The segment at 1–24 is disordered; that stretch reads MSSSRPASSSSSRNRQSSQARVLA. The GAF domain occupies 217-402; the sequence is SMEVLCNTVV…VFAVHVNREF (186 aa). Cys-322 provides a ligand contact to phytochromobilin. PAS domains follow at residues 618-688 and 748-822; these read VTSE…LQGK and VEGD…VSLC. Residues 902–1122 form the Histidine kinase domain; that stretch reads YMRHAINNPL…TFIITAELAS (221 aa).

It belongs to the phytochrome family. Homodimer. In terms of processing, contains one covalently linked phytochromobilin chromophore.

In terms of biological role, regulatory photoreceptor which exists in two forms that are reversibly interconvertible by light: the Pr form that absorbs maximally in the red region of the spectrum and the Pfr form that absorbs maximally in the far-red region. Photoconversion of Pr to Pfr induces an array of morphogenic responses, whereas reconversion of Pfr to Pr cancels the induction of those responses. Pfr controls the expression of a number of nuclear genes including those encoding the small subunit of ribulose-bisphosphate carboxylase, chlorophyll A/B binding protein, protochlorophyllide reductase, rRNA, etc. It also controls the expression of its own gene(s) in a negative feedback fashion. This chain is Phytochrome A type 3 (PHYA3), found in Avena sativa (Oat).